A 577-amino-acid polypeptide reads, in one-letter code: Adenine deaminase (577 aa).

Belongs to the metallo-dependent hydrolases superfamily. Adenine deaminase family. Mn(2+) is required as a cofactor.

It carries out the reaction adenine + H2O + H(+) = hypoxanthine + NH4(+). This Geobacillus kaustophilus (strain HTA426) protein is Adenine deaminase.